We begin with the raw amino-acid sequence, 185 residues long: Ribosome-recycling factor (185 aa).

The segment at 163-185 is disordered; it reads LTNEATKKIDAISKDKEKEITEG. Basic and acidic residues predominate over residues 167–185; the sequence is ATKKIDAISKDKEKEITEG.

The protein belongs to the RRF family.

It localises to the cytoplasm. Its function is as follows. Responsible for the release of ribosomes from messenger RNA at the termination of protein biosynthesis. May increase the efficiency of translation by recycling ribosomes from one round of translation to another. In Latilactobacillus sakei subsp. sakei (strain 23K) (Lactobacillus sakei subsp. sakei), this protein is Ribosome-recycling factor.